The following is a 258-amino-acid chain: Indole-3-glycerol phosphate synthase (258 aa).

This sequence belongs to the TrpC family.

It carries out the reaction 1-(2-carboxyphenylamino)-1-deoxy-D-ribulose 5-phosphate + H(+) = (1S,2R)-1-C-(indol-3-yl)glycerol 3-phosphate + CO2 + H2O. The protein operates within amino-acid biosynthesis; L-tryptophan biosynthesis; L-tryptophan from chorismate: step 4/5. The chain is Indole-3-glycerol phosphate synthase from Legionella pneumophila (strain Paris).